We begin with the raw amino-acid sequence, 2548 residues long: Variant-silencing SET domain-containing protein (2548 aa).

Positions 37–48 (IDDDDDDDNDNN) are enriched in acidic residues. Disordered stretches follow at residues 37-61 (IDDD…KTNN), 336-379 (GDPK…DDDN), and 585-629 (SVDR…NTQT). The segment covering 336 to 357 (GDPKKRIERNKQEIEDHRREQD) has biased composition (basic and acidic residues). Positions 358 to 378 (GENDQEEDNYDDYDDEDDDDD) are enriched in acidic residues. Residues 602-616 (NGSNNNNSSSNNNNN) are compositionally biased toward low complexity. The segment covering 617–629 (ITHITNDCDNTQT) has biased composition (polar residues). The PHD-type 1 zinc-finger motif lies at 787–846 (FYLCEFCEQNIFDMNNMIKKDKAKECMYRCNISCGRTFHKACVCYIKNNDNYICFFCLYD). Residues 929–944 (IKRRHIYRKRRRRGPR) are compositionally biased toward basic residues. 4 disordered regions span residues 929–1054 (IKRR…CDEN), 1546–1575 (EKNT…NTLD), 1713–1732 (EQGS…NNAK), and 1772–1822 (INNA…DDHR). Positions 986 to 1016 (DNNDDNNDNNDDNNDNNDDNNDNNDNNDDNN) are enriched in acidic residues. Composition is skewed to low complexity over residues 1017–1050 (NDNN…NNNN) and 1551–1572 (NKLC…TKYN). Over residues 1714–1732 (QGSINNAKHNEQGSINNAK) the composition is skewed to polar residues. One can recognise an AWS domain in the interval 2067–2117 (SDDYKCLCQGECNLYTCYNSLSNIQCSKSRCNLPEKIQDRKCFNRPFRKSF). An SET domain is found at 2119 to 2240 (KDLEIKKTEK…SGEEITYNYS (122 aa)). Tyr2239 is an S-adenosyl-L-methionine binding site. The PHD-type 2 zinc-finger motif lies at 2423 to 2471 (DEVCRKCKSCGNLTMCDKCFQSYHQLCGNMHSKMYKNNELVLCRFCQKY).

The protein belongs to the class V-like SAM-binding methyltransferase superfamily.

The protein localises to the nucleus. It is found in the chromosome. The enzyme catalyses L-lysyl(36)-[histone H3] + 3 S-adenosyl-L-methionine = N(6),N(6),N(6)-trimethyl-L-lysyl(36)-[histone H3] + 3 S-adenosyl-L-homocysteine + 3 H(+). Functionally, histone methyltransferase that specifically represses expression of the surface antigen-coding var genes by mediating trimethylation of 'Lys-36' of histone H3 (H3K36me3) on var genes. SETVS-dependent H3K36me3 is specifically involved in var genes silencing, a central step malaria pathogenesis: each parasite contains 60 distinct var genes that each code for a different PfEMP1 protein. During infection, the clonal parasite population expresses only 1 gene at a time, while the 59 other var genes are silenced. The parasite then switches to the expression of a new variant antigen as an immune-evasion mechanism to avoid the host antibody response. Represses expression of both var mRNA and antisense long non-coding RNA. This chain is Variant-silencing SET domain-containing protein (SETVS), found in Plasmodium falciparum (isolate 3D7).